We begin with the raw amino-acid sequence, 490 residues long: GTPase Der (490 aa).

EngA-type G domains lie at 3 to 166 (PVVA…MEDL) and 203 to 376 (IKLA…DSST). GTP contacts are provided by residues 9 to 16 (GRPNVGKS), 56 to 60 (DTGGI), 118 to 121 (NKTD), 209 to 216 (GRPNVGKS), 256 to 260 (DTAGV), and 321 to 324 (NKWD). One can recognise a KH-like domain in the interval 377 to 461 (RRVGTSMLTR…PIRIQFKEGE (85 aa)).

The protein belongs to the TRAFAC class TrmE-Era-EngA-EngB-Septin-like GTPase superfamily. EngA (Der) GTPase family. As to quaternary structure, associates with the 50S ribosomal subunit.

Its function is as follows. GTPase that plays an essential role in the late steps of ribosome biogenesis. The polypeptide is GTPase Der (Escherichia coli O157:H7).